Consider the following 446-residue polypeptide: Peptide chain release factor 1, mitochondrial (446 aa).

A mitochondrion-targeting transit peptide spans 1 to 62; that stretch reads MSHHLCIWLF…LLNKSWSRGC (62 aa). Residues 298-362 form a GGQ domain region; that stretch reads PKDLRVDTFR…LRARLYQQII (65 aa). The GGQ motif lies at 312–314; it reads GGQ. The residue at position 314 (glutamine 314) is an N5-methylglutamine.

Belongs to the prokaryotic/mitochondrial release factor family. Post-translationally, methylation of glutamine in the GGQ triplet by HEMK1 is conserved from bacteria to mammals.

Its subcellular location is the mitochondrion. In terms of biological role, mitochondrial peptide chain release factor that directs the termination of translation in response to the peptide chain non-canonical stop codons AGG and AGA. Non-canonical termination codons AGG and AGA are found at the end of MT-CO1/COX1 and MT-ND6/ND6 open reading frames, respectively. Recognizes non-canonical stop codons via a network of interactions between the codon, MTRF1 and the ribosomal RNA (rRNA): in contrast to other translation release factors, which identify the codon in the A-site via direct interactions of amino acid side chains with the bases, MTRF1 repositions the first 2 bases of the stop codon to use an intricate network of interactions that includes residues of the release factor, the rRNA of the small ribosomal subunit, as well as neighboring bases of the mRNA. The polypeptide is Peptide chain release factor 1, mitochondrial (Mus musculus (Mouse)).